The chain runs to 270 residues: Maximins-S type D (270 aa).

The N-terminal stretch at 1-18 is a signal peptide; the sequence is MNFNYFILVLFFITSGHA. 2 consecutive propeptides follow at residues 19 to 35 and 52 to 65; these read KSET…HIKR and SAEE…LVTR. Asparagine 83 carries the asparagine amide modification. Positions 87–100 are excised as a propeptide; sequence SAEEQDLAEDLVTR. Lysine 118 carries the post-translational modification Lysine amide. Residues 122-135 constitute a propeptide that is removed on maturation; sequence SAEDQDLAEDLVTR. Asparagine 153 is subject to Asparagine amide. Positions 157–170 are excised as a propeptide; that stretch reads SAEEQDLAEHLVTR. An Asparagine amide modification is found at asparagine 188. The propeptide occupies 192 to 205; it reads SAEEQDLVEDLVTR. The residue at position 223 (lysine 223) is a Lysine amide. Residues 227–240 constitute a propeptide that is removed on maturation; sequence SAEEQDLAEDLVTR. A Lysine amide modification is found at lysine 258. Positions 262 to 270 are excised as a propeptide; that stretch reads SAEQEKDMK.

Belongs to the maximin-S family. In terms of tissue distribution, expressed by the skin dorsal glands.

Its subcellular location is the secreted. In terms of biological role, maximin-S1 has no antimicrobial activity. Has no hemolytic activity. Its function is as follows. Maximin-S2 has an activity against mycoplasma but has no activity against common Gram-positive and Gram-negative bacteria nor fungi. Has no hemolytic activity. Functionally, maximin-S3 has an activity against mycoplasma but has no activity against common Gram-positive and Gram-negative bacteria nor fungi. Has no hemolytic activity. Maximin-S4 has an activity against mycoplasma but has no activity against common Gram-positive and Gram-negative bacteria nor fungi. Has no hemolytic activity. In terms of biological role, maximin-S5 has an activity against mycoplasma but has no activity against common Gram-positive and Gram-negative bacteria nor fungi. Has no hemolytic activity. This Bombina maxima (Giant fire-bellied toad) protein is Maximins-S type D.